The primary structure comprises 143 residues: Large ribosomal subunit protein uL11 (143 aa).

Belongs to the universal ribosomal protein uL11 family. Part of the ribosomal stalk of the 50S ribosomal subunit. Interacts with L10 and the large rRNA to form the base of the stalk. L10 forms an elongated spine to which L12 dimers bind in a sequential fashion forming a multimeric L10(L12)X complex. Post-translationally, one or more lysine residues are methylated.

Its function is as follows. Forms part of the ribosomal stalk which helps the ribosome interact with GTP-bound translation factors. The sequence is that of Large ribosomal subunit protein uL11 from Rhizorhabdus wittichii (strain DSM 6014 / CCUG 31198 / JCM 15750 / NBRC 105917 / EY 4224 / RW1) (Sphingomonas wittichii).